Consider the following 826-residue polypeptide: Dolichyl-diphosphooligosaccharide--protein glycosyltransferase subunit STT3B (826 aa).

Residues Met1–Gly60 are disordered. An N-acetylalanine modification is found at Ala2. The Cytoplasmic segment spans residues Ala2–Ala41. 3 positions are modified to phosphoserine: Ser13, Ser18, and Ser29. The span at Gly37–Ala49 shows a compositional bias: low complexity. Residues His42–Ser86 traverse the membrane as a helical segment. At Ser87–Leu173 the chain is on the lumenal side. A DXD motif 1 motif is present at residues Glu101 to Asp103. Asp103 is a Mn(2+) binding site. A helical transmembrane segment spans residues Ala174–Leu192. At Trp193 to Asn194 the chain is on the cytoplasmic side. The chain crosses the membrane as a helical span at residues Gln195–Ile212. Residues Ser213–Glu223 lie on the Lumenal side of the membrane. Mn(2+)-binding residues include Asp221 and Glu223. A DXD motif 2 motif is present at residues Asp221–Glu223. The helical transmembrane segment at Gly224–Thr243 threads the bilayer. Topologically, residues Gly244–Ser245 are cytoplasmic. A helical transmembrane segment spans residues Val246 to Val260. At Ser261–Gly265 the chain is on the lumenal side. A helical membrane pass occupies residues Tyr266–Leu282. Residues Met283–Ser287 are Cytoplasmic-facing. A helical membrane pass occupies residues Lys288–Phe313. The Lumenal portion of the chain corresponds to Gln314–His321. A helical membrane pass occupies residues Met322–Arg341. Over Asp342–Gln350 the chain is Cytoplasmic. The helical transmembrane segment at Thr351–Leu371 threads the bilayer. Residues Thr372–Thr410 lie on the Lumenal side of the membrane. Positions Ser402–Glu405 match the SVSE motif motif. The helical transmembrane segment at Trp411–Ile433 threads the bilayer. The Cytoplasmic segment spans residues Lys434–Glu439. Residues Arg440 to Val456 traverse the membrane as a helical segment. The Lumenal portion of the chain corresponds to Met457 to Leu460. Dolichyl diphosphooligosaccharide is bound at residue Arg459. The chain crosses the membrane as a helical span at residues Met461–His482. The Cytoplasmic segment spans residues Tyr483–Lys526. Residues Arg490–Asn509 are disordered. Phosphoserine occurs at positions 498 and 499. The helical transmembrane segment at Thr527–Val552 threads the bilayer. The Lumenal portion of the chain corresponds to His553 to Val826. The tract at residues Trp604–Asp606 is interacts with target acceptor peptide in protein substrate. The short motif at Trp604–Gly608 is the WWDYG motif element. Tyr609 is a dolichyl diphosphooligosaccharide binding site. N-linked (GlcNAc...) asparagine glycosylation is found at Asn616 and Asn623. A glycan (N-linked (GlcNAc...) (high mannose) asparagine) is linked at Asn627. An N-linked (GlcNAc...) asparagine glycan is attached at Asn641. A DK motif motif is present at residues Asp671–Met678.

It belongs to the STT3 family. As to quaternary structure, component of the oligosaccharyltransferase (OST) complex. There are 2 OST complexes, OST-A and OST-B, which contain STT3A or STT3B as catalytic subunit, respectively. OST-A and OST-B contain common core subunits RPN1, RPN2, OST48, OST4, DAD1 and TMEM258, and OST-B contains either MAGT1 or TUSC3 as specific accessory subunit. Requires Mg(2+) as cofactor. It depends on Mn(2+) as a cofactor. As to expression, expressed in heart, brain, placenta, lung, liver, muscle, kidney and pancreas. Expressed in skin fibroblasts (at protein level).

It localises to the endoplasmic reticulum. The protein resides in the endoplasmic reticulum membrane. The enzyme catalyses a di-trans,poly-cis-dolichyl diphosphooligosaccharide + L-asparaginyl-[protein] = N(4)-(oligosaccharide-(1-&gt;4)-N-acetyl-beta-D-glucosaminyl-(1-&gt;4)-N-acetyl-beta-D-glucosaminyl)-L-asparaginyl-[protein] + a di-trans,poly-cis-dolichyl diphosphate + H(+). It participates in protein modification; protein glycosylation. In terms of biological role, catalytic subunit of the oligosaccharyl transferase (OST) complex that catalyzes the initial transfer of a defined glycan (Glc(3)Man(9)GlcNAc(2) in eukaryotes) from the lipid carrier dolichol-pyrophosphate to an asparagine residue within an Asn-X-Ser/Thr consensus motif in nascent polypeptide chains, the first step in protein N-glycosylation. N-glycosylation occurs cotranslationally and the complex associates with the Sec61 complex at the channel-forming translocon complex that mediates protein translocation across the endoplasmic reticulum (ER). All subunits are required for a maximal enzyme activity. This subunit contains the active site and the acceptor peptide and donor lipid-linked oligosaccharide (LLO) binding pockets. STT3B is present in a small subset of OST complexes (OST-B) and mediates both cotranslational and post-translational N-glycosylation of target proteins: STT3B-containing complexes are required for efficient post-translational glycosylation and while they are less competent than STT3A-containing complexes for cotranslational glycosylation, they have the ability to mediate glycosylation of some nascent sites that are not accessible for STT3A. STT3B-containing complexes also act post-translationally and mediate modification of skipped glycosylation sites in unfolded proteins. Plays a role in ER-associated degradation (ERAD) pathway that mediates ubiquitin-dependent degradation of misfolded endoplasmic reticulum proteins by mediating N-glycosylation of unfolded proteins, which are then recognized by the ERAD pathway and targeted for degradation. Mediates glycosylation of the disease variant AMYL-TTR 'Asp-38' of TTR at 'Asn-118', leading to its degradation. The polypeptide is Dolichyl-diphosphooligosaccharide--protein glycosyltransferase subunit STT3B (Homo sapiens (Human)).